The sequence spans 334 residues: Putative peptide import ATP-binding protein BAB2_1053 (334 aa).

The region spanning 22–272 (VRTDDLVRDF…PLHPYSRALL (251 aa)) is the ABC transporter domain. Position 64-71 (64-71 (GESGSGKS)) interacts with ATP.

The protein belongs to the ABC transporter superfamily. The complex is composed of two ATP-binding proteins (BAB2_1052 and BAB2_1053), two transmembrane proteins (BAB2_1050 and BAB2_1051) and a solute-binding protein (BAB2_1049).

Its subcellular location is the cell inner membrane. In terms of biological role, probably part of an ABC transporter complex that could be involved in peptide import. Probably responsible for energy coupling to the transport system. This chain is Putative peptide import ATP-binding protein BAB2_1053, found in Brucella abortus (strain 2308).